The primary structure comprises 264 residues: Thymidylate synthase (264 aa).

DUMP is bound at residue R21. (6R)-5,10-methylene-5,6,7,8-tetrahydrofolate is bound at residue H51. 126 to 127 (RR) contacts dUMP. C146 (nucleophile) is an active-site residue. DUMP-binding positions include 166 to 169 (RSAD), N177, and 207 to 209 (HLY). D169 contributes to the (6R)-5,10-methylene-5,6,7,8-tetrahydrofolate binding site. Position 263 (A263) interacts with (6R)-5,10-methylene-5,6,7,8-tetrahydrofolate.

This sequence belongs to the thymidylate synthase family. Bacterial-type ThyA subfamily. As to quaternary structure, homodimer.

The protein localises to the cytoplasm. It catalyses the reaction dUMP + (6R)-5,10-methylene-5,6,7,8-tetrahydrofolate = 7,8-dihydrofolate + dTMP. The protein operates within pyrimidine metabolism; dTTP biosynthesis. Catalyzes the reductive methylation of 2'-deoxyuridine-5'-monophosphate (dUMP) to 2'-deoxythymidine-5'-monophosphate (dTMP) while utilizing 5,10-methylenetetrahydrofolate (mTHF) as the methyl donor and reductant in the reaction, yielding dihydrofolate (DHF) as a by-product. This enzymatic reaction provides an intracellular de novo source of dTMP, an essential precursor for DNA biosynthesis. The protein is Thymidylate synthase of Azotobacter vinelandii (strain DJ / ATCC BAA-1303).